We begin with the raw amino-acid sequence, 440 residues long: MMADEEEEAKHVLQKLQGLVDRLYCFRDSYFETHSVEDAGRKQQDVQEEMEKTLQQMEEVLGSAQVEAQALMLKGKALNVTPDYSPEAEVLLSKAVKLEPELVEAWNQLGEVYWKKGDVASAHTCFSGALTHCKNKVSLQNLSMVLRQLQTDSGDEHSRHVMDSVRQAKLAVQMDVLDGRSWYILGNAYLSLYFNTGQNPKISQQALSAYAQAEKVDRKASSNPDLHLNRATLHKYEESYGEALEGFSQAAALDPVWPEPQQREQQLLEFLSRLTSLLESKGKTKPKKLQSMLGSLRPAHLGPCGDGRYQSASGQKMTLELKPLSTLQPGVNSGTVVLGKVVFSLTTEEKVPFTFGLVDSDGPCYAVMVYNVVQSWGVLIGDSVAIPEPNLRHHQIRHKGKDYSFSSVRVETPLLLVVNGKPQNSSSQASATVASRPQCE.

TPR repeat units lie at residues 7-61 (EEAK…EEVL), 68-98 (AQALMLKGKALNVTPDYSPEAEVLLSKAVKL), 103-130 (VEAWNQLGEVYWKKGDVASAHTCFSGAL), 136-174 (KVSLQNLSMVLRQLQTDSGDEHSRHVMDSVRQAKLAVQM), and 179-216 (GRSWYILGNAYLSLYFNTGQNPKISQQALSAYAQAEKV). Positions 13–24 (LQKLQGLVDRLY) match the Nuclear export signal motif. Serine 203 is modified (phosphoserine; by ATM). The residue at position 221 (serine 221) is a Phosphoserine; by CHEK2. The stretch at 224–253 (PDLHLNRATLHKYEESYGEALEGFSQAAAL) is one TPR 6 repeat. A mediates interaction with 28S rRNA of ribosome-coding tubulin region spans residues 285-287 (KPK).

Interacts with JMY and p300/EP300; the interaction occurs in the nucleus and augments the association between JMY and p300/EP300 in response to DNA damage. Interacts with PRMT5; the interaction is DNA damage-dependent and promotes PRMT5 interaction with p53/TP53 and subsequent methylation. Forms a complex with HSF1 and p300/EP300; these interactions augment chromatin-bound HSF1 and p300/EP300 histone acetyltransferase activity, resulting in enhanced heat-shock-responsive transcription. Interacts with JMY; the interaction occurs in the cytoplasm and results in the inhibition of JYM's nucleation activity. Interacts with ribosome-coding tubulin (via 60S subunit 28S rRNA and protein uL24/RPL26) and the N-terminal of nascent tubulin polypeptide (via alpha-tubulin MREC motif and beta-tubulin MREI motif); these interactions result in tubulin mRNA-targeted degradation. Interacts with ATP5F1B; the interaction occurs in the mitochondria and results in ATP production decrease. Interacts with p53/TP53; the interaction occurs in the mitochondria and results in increased apoptosis. In terms of processing, phosphorylation by ATM kinase induces nuclear accumulation while interfering with nuclear export, and phosphorylation by CHEK2 kinase enhances nuclear stability. Expressed in heart, brain, spleen, lung, liver, skeletal muscle, kidney and testis.

It is found in the nucleus. Its subcellular location is the cytoplasm. The protein resides in the cytoplasmic vesicle. It localises to the mitochondrion matrix. Functionally, cofactor involved in the regulation of various cellular mechanisms such as actin regulation, autophagy, chromatin regulation and DNA repair. In physiological conditions, interacts with cofactor JMY in the cytoplasm which prevents JMY's actin nucleation activity and ability to activate the Arp2/3 complex. Acts as a negative regulator of nutrient stress-induced autophagy by inhibiting JMY's interaction with MAP1LC3B, thereby preventing autophagosome formation. Involves in tubulin autoregulation by promoting its degradation in response to excess soluble tubulin. To do so, associates with the active ribosome near the ribosome exit tunnel and with nascent tubulin polypeptides early during their translation, triggering tubulin mRNA-targeted degradation. Following DNA damage, phosphorylated by DNA damage responsive protein kinases ATM and CHEK2, leading to its nuclear accumulation and stability. Nuclear TTC5/STRAP promotes the assembly of a stress-responsive p53/TP53 coactivator complex, which includes the coactivators JMY and p300, thereby increasing p53/TP53-dependent transcription and apoptosis. Also recruits arginine methyltransferase PRMT5 to p53/TP53 when DNA is damaged, allowing PRMT5 to methylate p53/TP53. In DNA stress conditions, also prevents p53/TP53 degradation by E3 ubiquitin ligase MDM2. Upon heat-shock stress, forms a chromatin-associated complex with heat-shock factor 1 HSF1 and p300/EP300 to stimulate heat-shock-responsive transcription, thereby increasing cell survival. Mitochondrial TTC5/STRAP interacts with ATP synthase subunit beta ATP5F1B which decreased ATP synthase activity and lowers mitochondrial ATP production, thereby regulating cellular respiration and mitochondrial-dependent apoptosis. Mitochondrial TTC5/STRAP also regulates p53/TP53-mediated apoptosis. The sequence is that of Tetratricopeptide repeat protein 5 from Mus musculus (Mouse).